The primary structure comprises 807 residues: Serine/threonine-protein kinase B-raf (807 aa).

2 stretches are compositionally biased toward low complexity: residues 1-15 (MAAL…GASL) and 110-128 (SVSS…SSSL). Disordered stretches follow at residues 1–36 (MAAL…YAGS) and 104–128 (GNGT…SSSL). Residues 155–227 (PIVRVFLPNK…TGEELHVEVL (73 aa)) enclose the RBD domain. The segment at 234–280 (THNFVRKTFFTLAFCDFCRKLLFQGFRCQTCGYKFHQRCSTEVPLMC) adopts a Phorbol-ester/DAG-type zinc-finger fold. The Zn(2+) site is built by H235, C248, C251, C261, C264, H269, C272, and C280. Over residues 303-313 (EETTLGETTPA) the composition is skewed to polar residues. Disordered regions lie at residues 303 to 372 (EETT…VHIN) and 434 to 494 (STAG…EIPD). Residues 314-328 (SGSYPSVPPSDSVGP) are compositionally biased toward low complexity. 2 stretches are compositionally biased toward basic and acidic residues: residues 348 to 363 (PADE…RDRS) and 463 to 487 (QRER…RDSS). The 261-residue stretch at 497–757 (ITVGQRIGSG…PQILASIELL (261 aa)) folds into the Protein kinase domain. ATP-binding positions include 503–511 (IGSGSFGTV) and K523. D616 functions as the Proton acceptor in the catalytic mechanism. S790 carries the phosphoserine; by MAPK1 modification. T793 is modified (phosphothreonine; by MAPK1).

It belongs to the protein kinase superfamily. TKL Ser/Thr protein kinase family. RAF subfamily. Zn(2+) is required as a cofactor. Post-translationally, phosphorylated. Expressed preferentially in neural tissue.

It localises to the nucleus. Its subcellular location is the cytoplasm. It is found in the cell membrane. The catalysed reaction is L-seryl-[protein] + ATP = O-phospho-L-seryl-[protein] + ADP + H(+). The enzyme catalyses L-threonyl-[protein] + ATP = O-phospho-L-threonyl-[protein] + ADP + H(+). In quiescent cells, maintained in an inactive state via an intramolecular interaction between the protein kinase and N-terminal domains. Following mitogen-mediated cell activation, binds via its RGB domain to active HRAS (GTP-bound) which releases the inhibitory intramolecular interaction between the two domains. This allows the MAP2K1-mediated dimerization of KSR1 or KSR2, and BRAF which activates BRAF. Its function is as follows. Protein kinase involved in the activation of the MAP signaling cascade. May play a role in transducing specific signals in neural cells. The sequence is that of Serine/threonine-protein kinase B-raf from Coturnix japonica (Japanese quail).